Consider the following 84-residue polypeptide: Replication regulatory protein repA2 (84 aa).

The span at 1 to 13 shows a compositional bias: polar residues; that stretch reads MSQTENAVTSSSG. The tract at residues 1–31 is disordered; it reads MSQTENAVTSSSGAKRAYRKGNPLSDAEKQR.

This protein is involved in the determination of copy number in gene replication. It binds to the repA promoter thus inhibiting the synthesis of the mRNA for the initiator protein RepA. In Escherichia coli, this protein is Replication regulatory protein repA2 (repA2).